Here is a 463-residue protein sequence, read N- to C-terminus: L-seryl-tRNA(Sec) selenium transferase (463 aa).

K294 is subject to N6-(pyridoxal phosphate)lysine.

It belongs to the SelA family. Requires pyridoxal 5'-phosphate as cofactor.

It is found in the cytoplasm. It carries out the reaction L-seryl-tRNA(Sec) + selenophosphate + H(+) = L-selenocysteinyl-tRNA(Sec) + phosphate. It participates in aminoacyl-tRNA biosynthesis; selenocysteinyl-tRNA(Sec) biosynthesis; selenocysteinyl-tRNA(Sec) from L-seryl-tRNA(Sec) (bacterial route): step 1/1. Converts seryl-tRNA(Sec) to selenocysteinyl-tRNA(Sec) required for selenoprotein biosynthesis. The protein is L-seryl-tRNA(Sec) selenium transferase of Hyphomonas neptunium (strain ATCC 15444).